Consider the following 217-residue polypeptide: Acyl-homoserine-lactone synthase (217 aa).

This sequence belongs to the autoinducer synthase family.

The enzyme catalyses a fatty acyl-[ACP] + S-adenosyl-L-methionine = an N-acyl-L-homoserine lactone + S-methyl-5'-thioadenosine + holo-[ACP] + H(+). Required for the synthesis of OHHL (N-(3-oxohexanoyl)-L-homoserine lactone), an autoinducer molecule which binds to ExpR and thus acts in virulence (soft rot disease) through the activation of genes for plant tissue macerating enzymes. The chain is Acyl-homoserine-lactone synthase (expI) from Pectobacterium parmentieri.